The chain runs to 336 residues: Cell division protein ZipA (336 aa).

Residues M1 to L6 lie on the Periplasmic side of the membrane. A helical membrane pass occupies residues V7–I27. Topologically, residues R28–V336 are cytoplasmic. 2 disordered regions span residues Q31 to A118 and Y174 to G200. The span at L73–S91 shows a compositional bias: polar residues. Positions T108–A118 are enriched in basic and acidic residues. The segment covering Q179–P193 has biased composition (low complexity).

This sequence belongs to the ZipA family. In terms of assembly, interacts with FtsZ via their C-terminal domains.

Its subcellular location is the cell inner membrane. Functionally, essential cell division protein that stabilizes the FtsZ protofilaments by cross-linking them and that serves as a cytoplasmic membrane anchor for the Z ring. Also required for the recruitment to the septal ring of downstream cell division proteins. The polypeptide is Cell division protein ZipA (Shewanella denitrificans (strain OS217 / ATCC BAA-1090 / DSM 15013)).